A 472-amino-acid polypeptide reads, in one-letter code: Flotillin-like protein 6 (472 aa).

A lipid anchor (S-palmitoyl cysteine) is attached at cysteine 37. Residues glutamate 237 to glutamate 327 are a coiled coil.

The protein belongs to the band 7/mec-2 family. Flotillin subfamily. May be palmitoylated. Very low occasional expression in roots and nodules.

The protein resides in the cell membrane. It localises to the membrane. The protein localises to the caveola. In terms of biological role, may act as a scaffolding protein within caveolar membranes, functionally participating in formation of caveolae or caveolae-like vesicles. May be involved in nodule formation. In Medicago truncatula (Barrel medic), this protein is Flotillin-like protein 6 (FLOT6).